The chain runs to 910 residues: Adhesion G-protein coupled receptor F1 (910 aa).

The first 19 residues, 1-19 (MKVGVLWLISFFTFTDGHG), serve as a signal peptide directing secretion. At 20-583 (GFLGKNDGIK…SPFVPSTIFP (564 aa)) the chain is on the extracellular side. 17 N-linked (GlcNAc...) asparagine glycosylation sites follow: Asn-139, Asn-168, Asn-205, Asn-282, Asn-310, Asn-317, Asn-329, Asn-354, Asn-368, Asn-389, Asn-410, Asn-423, Asn-437, Asn-455, Asn-512, Asn-528, and Asn-553. Residues 148–256 (ERTKIWGTFK…GSFRVFGKAQ (109 aa)) form the SEA domain. Intrachain disulfides connect Cys-257–Cys-287 and Cys-275–Cys-299. The GAIN-B domain maps to 437–579 (NKSQLKRGYS…SILMSPFVPS (143 aa)). Disulfide bonds link Cys-534–Cys-561 and Cys-549–Cys-563. Positions 534 to 579 (CVFWDFSHLQWNDAGCHLVNETQDIVTCQCTHLTSFSILMSPFVPS) are GPS. The segment at 568-576 (SFSILMSPF) is stachel. The helical transmembrane segment at 584-609 (VVKWITYVGLGISIGSLILCLIIEAL) threads the bilayer. At 610 to 621 (FWKQIKKSQTSH) the chain is on the cytoplasmic side. The chain crosses the membrane as a helical span at residues 622-646 (TRRICMVNIALSLLIADVWFIVGAT). Residues 647 to 658 (VDTTVNPSGVCT) lie on the Extracellular side of the membrane. A disulfide bridge connects residues Cys-657 and Cys-733. A helical transmembrane segment spans residues 659–684 (AAVFFTHFFYLSLFFWMLMLGILLAY). The Cytoplasmic segment spans residues 685–696 (RIILVFHHMAQH). A helical membrane pass occupies residues 697 to 719 (LMMAVGFCLGYGCPLIISVITIA). Topologically, residues 720–742 (VTQPSNTYKRKDVCWLNWSNGSK) are extracellular. N-linked (GlcNAc...) asparagine glycosylation is found at Asn-736 and Asn-739. A helical transmembrane segment spans residues 743-767 (PLLAFVVPALAIVAVNFVVVLLVLT). Residues 768 to 784 (KLWRPTVGERLSRDDKA) lie on the Cytoplasmic side of the membrane. The helical transmembrane segment at 785-813 (TIIRVGKSLLILTPLLGLTWGFGIGTIVD) threads the bilayer. The Extracellular portion of the chain corresponds to 814-816 (SQN). The helical transmembrane segment at 817–842 (LAWHVIFALLNAFQGFFILCFGILLD) threads the bilayer. The Cytoplasmic portion of the chain corresponds to 843–910 (SKLRQLLFNK…IMLTQFVSNE (68 aa)).

The protein belongs to the G-protein coupled receptor 2 family. Adhesion G-protein coupled receptor (ADGR) subfamily. In terms of assembly, heterodimer of 2 chains generated by proteolytic processing; the large extracellular N-terminal fragment and the membrane-bound C-terminal fragment predominantly remain associated and non-covalently linked. Post-translationally, autoproteolytically processed at the GPS region of the GAIN-B domain; this cleavage modulates receptor activity. Glycosylated. Glycosylation at Asn-389 is required for secretion or folding. In terms of tissue distribution, mainly expressed in the kidney. Up-regulated in lung adenocarcinomas and prostate cancers.

It localises to the cell membrane. The protein localises to the secreted. Forms a heterodimer of 2 chains generated by proteolytic processing that remain associated through non-covalent interactions mediated by the GAIN-B domain. In the inactivated receptor, the Stachel sequence (also named stalk) is embedded in the GAIN-B domain, where it adopts a beta-strand conformation. On activation, the Stachel moves into the 7 transmembrane region and adopts a twisted hook-shaped configuration that forms contacts within the receptor, leading to coupling of a G-alpha protein, which activates signaling. The cleaved GAIN-B and N-terminal domains can then dissociate from the rest of the receptor. Functionally, adhesion G-protein coupled receptor (aGPCR) for N-docosahexaenoylethanolamine (synaptamide), an omega-3 fatty acid lipid highly enriched in the brain. Ligand binding causes a conformation change that triggers signaling via guanine nucleotide-binding proteins (G proteins) and modulates the activity of downstream effectors, such as adenylate cyclase. ADGRF1 is coupled to G(s) G proteins and mediates activation of adenylate cyclase activity. Also able to couple to G(q), G(i) and G(12)/G(13) G proteins; additional evidence is however required to confirm this result in vivo. Involved in the development of neurons and cognitive function. In liver, involved in fat accumulation. The protein is Adhesion G-protein coupled receptor F1 of Homo sapiens (Human).